Here is a 557-residue protein sequence, read N- to C-terminus: uncharacterized protein (557 aa).

The tract at residues 17-38 is disordered; it reads NSAEFSIHSTSNPTNPEEPNIT. 9 helical membrane passes run 60–80, 94–114, 214–234, 261–281, 297–317, 348–368, 407–427, 468–488, and 498–518; these read LSLF…PSVA, GLLW…LSMA, SVGT…ILAM, FAIL…DAPF, GIIL…IVIA, LGIL…NLIA, VIGV…GAVF, IGFC…FPSV, and WTCL…AISG.

Belongs to the amino acid-polyamine-organocation (APC) superfamily.

Its subcellular location is the membrane. This is an uncharacterized protein from Schizosaccharomyces pombe (strain 972 / ATCC 24843) (Fission yeast).